The sequence spans 173 residues: Crossover junction endodeoxyribonuclease RuvC (173 aa).

Catalysis depends on residues D8, E67, and D139. Positions 8, 67, and 139 each coordinate Mg(2+).

Belongs to the RuvC family. Homodimer which binds Holliday junction (HJ) DNA. The HJ becomes 2-fold symmetrical on binding to RuvC with unstacked arms; it has a different conformation from HJ DNA in complex with RuvA. In the full resolvosome a probable DNA-RuvA(4)-RuvB(12)-RuvC(2) complex forms which resolves the HJ. The cofactor is Mg(2+).

It is found in the cytoplasm. It catalyses the reaction Endonucleolytic cleavage at a junction such as a reciprocal single-stranded crossover between two homologous DNA duplexes (Holliday junction).. The RuvA-RuvB-RuvC complex processes Holliday junction (HJ) DNA during genetic recombination and DNA repair. Endonuclease that resolves HJ intermediates. Cleaves cruciform DNA by making single-stranded nicks across the HJ at symmetrical positions within the homologous arms, yielding a 5'-phosphate and a 3'-hydroxyl group; requires a central core of homology in the junction. The consensus cleavage sequence is 5'-(A/T)TT(C/G)-3'. Cleavage occurs on the 3'-side of the TT dinucleotide at the point of strand exchange. HJ branch migration catalyzed by RuvA-RuvB allows RuvC to scan DNA until it finds its consensus sequence, where it cleaves and resolves the cruciform DNA. The polypeptide is Crossover junction endodeoxyribonuclease RuvC (Shewanella loihica (strain ATCC BAA-1088 / PV-4)).